A 333-amino-acid chain; its full sequence is Procathepsin L (333 aa).

The first 17 residues, 1-17, serve as a signal peptide directing secretion; sequence MNPTLILAAFCLGIASA. Residues 18 to 113 constitute a propeptide, activation peptide; sequence TLTFDHSLEA…KVFQEPLFYE (96 aa). E122 is a binding site for Zn(2+). Intrachain disulfides connect C135–C178 and C169–C211. The active site involves C138. E163, D184, E199, E205, and E209 together coordinate Zn(2+). N221 carries an N-linked (GlcNAc...) asparagine glycan. Zn(2+) is bound by residues D227, D250, H253, D273, and D275. The cysteines at positions 269 and 322 are disulfide-linked. The active site involves H276. The propeptide occupies 289 to 291; it reads ESD. N300 is a catalytic residue.

This sequence belongs to the peptidase C1 family. As to quaternary structure, dimer of a heavy and a light chain linked by disulfide bonds. Interacts with Long isoform of CD74/Ii chain; the interaction stabilizes the conformation of mature CTSL. During export along the endocytic pathway, pro-CTSL undergoes several proteolytic cleavages to generate the CTSL single-chain and two-chain mature forms, composed of a heavy chain linked to a light chain by disulfide bonds. Autocleavage; produces the single-chain CTSL after cleavage of the propeptide. The cleavage can be intermolecular.

The protein localises to the lysosome. It localises to the apical cell membrane. The protein resides in the cytoplasmic vesicle. Its subcellular location is the secretory vesicle. It is found in the chromaffin granule. The protein localises to the secreted. It localises to the extracellular space. The protein resides in the nucleus. The enzyme catalyses Specificity close to that of papain. As compared to cathepsin B, cathepsin L exhibits higher activity toward protein substrates, but has little activity on Z-Arg-Arg-NHMec, and no peptidyl-dipeptidase activity.. With respect to regulation, inhibited by the propeptide produced by autocleavage. Long isoform of CD74/Ii chain stabilizes the conformation of mature CTSL by binding to its active site and serving as a chaperone to help maintain a pool of mature enzyme in endocytic compartments and extracellular space of APCs. IFNG enhances the conversion into the CTSL mature and active form. Inhibited by CST6. Inhibited by the glycopeptide antibiotic teicoplanin. Inhibited by amantadine. Its function is as follows. Thiol protease important for the overall degradation of proteins in lysosomes. Plays a critical for normal cellular functions such as general protein turnover, antigen processing and bone remodeling. Involved in the solubilization of cross-linked TG/thyroglobulin and in the subsequent release of thyroid hormone thyroxine (T4) by limited proteolysis of TG/thyroglobulin in the thyroid follicle lumen. In neuroendocrine chromaffin cells secretory vesicles, catalyzes the prohormone proenkephalin processing to the active enkephalin peptide neurotransmitter. In thymus, regulates CD4(+) T cell positive selection by generating the major histocompatibility complex class II (MHCII) bound peptide ligands presented by cortical thymic epithelial cells. Also mediates invariant chain processing in cortical thymic epithelial cells. Major elastin-degrading enzyme at neutral pH. Accumulates as a mature and active enzyme in the extracellular space of antigen presenting cells (APCs) to regulate degradation of the extracellular matrix in the course of inflammation. Secreted form generates endostatin from COL18A1. Critical for cardiac morphology and function. Plays an important role in hair follicle morphogenesis and cycling, as well as epidermal differentiation. Required for maximal stimulation of steroidogenesis by TIMP1. In terms of biological role, (Microbial infection) In cells lacking TMPRSS2 expression, facilitates human coronaviruses SARS-CoV and SARS-CoV-2 infections via a slow acid-activated route with the proteolysis of coronavirus spike (S) glycoproteins in lysosome for entry into host cell. Proteolysis within lysosomes is sufficient to activate membrane fusion by coronaviruses SARS-CoV and EMC (HCoV-EMC) S as well as Zaire ebolavirus glycoproteins. Functionally, functions in the regulation of cell cycle progression through proteolytic processing of the CUX1 transcription factor. Translation initiation at downstream start sites allows the synthesis of isoforms that are devoid of a signal peptide and localize to the nucleus where they cleave the CUX1 transcription factor and modify its DNA binding properties. This chain is Procathepsin L, found in Homo sapiens (Human).